The primary structure comprises 778 residues: Protein SPT2 homolog (778 aa).

3 disordered regions span residues 1 to 21 (MDFHSVLKMAAAKPGSDGIAK), 50 to 625 (KKDE…AKPK), and 639 to 685 (VPKS…DDDD). Positions 1–665 (MDFHSVLKMA…PGHRPAMRPP (665 aa)) are important for interaction with DNA. A coiled-coil region spans residues 44–83 (VQAFLRKKDEESRRKETVEKRKKEDLLAKRKELKHDRKAR). Basic and acidic residues predominate over residues 50–78 (KKDEESRRKETVEKRKKEDLLAKRKELKH). The span at 114 to 135 (EEDQNDNMAAEGEEYMTEEELY) shows a compositional bias: acidic residues. The segment covering 153–167 (QKVPKPAPGKKPPTP) has biased composition (pro residues). A compositionally biased stretch (basic and acidic residues) spans 190-227 (RPVKKEERLRTAEELKELEFLERKAQKADRKDPKRNEQ). A coiled-coil region spans residues 193-221 (KKEERLRTAEELKELEFLERKAQKADRKD). Positions 242–269 (LKGTHSGNSKSSSTEQNGTIRKSSSDTG) are enriched in polar residues. A compositionally biased stretch (basic and acidic residues) spans 270–286 (SRTEKSGSVFHTKESKK). Low complexity predominate over residues 312–335 (SSQPSAASNSAFGRPSGSARPSGS). Gly residues-rich tracts occupy residues 336–357 (SGPGRPLGGSGSSSGKSTGGSA) and 365–384 (GGSGSGSGKPMGGSGSGKPI). A compositionally biased stretch (low complexity) spans 385–394 (GGLHSSHGSG). Over residues 395 to 417 (KPTGGTGSGSGKPTGASGSGSGK) the composition is skewed to gly residues. 2 stretches are compositionally biased toward low complexity: residues 418 to 493 (PTGS…SGSA) and 506 to 559 (GSGS…PSSS). Residues 588–604 (VRPNSTSVPGSARSSLG) show a composition bias toward polar residues. A compositionally biased stretch (pro residues) spans 662 to 671 (MRPPGPPLPP). The tract at residues 666–778 (GPPLPPITSS…QLKAAKKMSR (113 aa)) is important for interaction with histones. The stretch at 735-778 (REQQKEEARSLRLGIQEDLEELQREEEELKRKAKQLKAAKKMSR) forms a coiled coil.

The protein belongs to the SPT2 family. In terms of assembly, interacts with histones. Interacts with a heterotetrameric complex formed by histone H3 and H4, especially when the histone tetramer is not bound to DNA.

It localises to the nucleus. The protein localises to the nucleolus. Its function is as follows. Histone chaperone that stabilizes pre-existing histone tetramers and regulates replication-independent histone exchange on chromatin. Required for normal chromatin refolding in the coding region of transcribed genes, and for the suppression of spurious transcription. Binds DNA and histones and promotes nucleosome assembly (in vitro). Facilitates formation of tetrameric histone complexes containing histone H3 and H4. Modulates RNA polymerase 1-mediated transcription. Binds DNA, with a preference for branched DNA species, such as Y-form DNA and Holliday junction DNA. The polypeptide is Protein SPT2 homolog (spty2d1) (Xenopus tropicalis (Western clawed frog)).